The chain runs to 995 residues: S1 RNA-binding domain-containing protein 1 (995 aa).

Residues 23–78 are disordered; the sequence is SFSELSSASEEDDKEDSAWEPQKKVPRSRKQPPPKESKPKRMPQVKKNAPQISDGS. A Glycyl lysine isopeptide (Lys-Gly) (interchain with G-Cter in SUMO2) cross-link involves residue Lys-84. A compositionally biased stretch (basic residues) spans 116 to 132; the sequence is TKRKCAAQPHAVRRTKK. Residues 116–164 form a disordered region; that stretch reads TKRKCAAQPHAVRRTKKLKVDEETSKASYLEGESNSSETPSTSTVWGGT. A Glycyl lysine isopeptide (Lys-Gly) (interchain with G-Cter in SUMO2) cross-link involves residue Lys-134. The span at 146 to 159 shows a compositional bias: low complexity; it reads EGESNSSETPSTST. Glycyl lysine isopeptide (Lys-Gly) (interchain with G-Cter in SUMO2) cross-links involve residues Lys-166, Lys-167, and Lys-183. A Glycyl lysine isopeptide (Lys-Gly) (interchain with G-Cter in SUMO1); alternate cross-link involves residue Lys-185. Residue Lys-185 forms a Glycyl lysine isopeptide (Lys-Gly) (interchain with G-Cter in SUMO2); alternate linkage. Residues 258 to 288 adopt a coiled-coil conformation; the sequence is ADSLREVQQTLEELRAVAKKVHSTIQKIKKE. The residue at position 861 (Ser-861) is a Phosphoserine. The 74-residue stretch at 919 to 992 folds into the S1 motif domain; it reads GTVLTGKVEN…PRSRITLDLI (74 aa). A Glycyl lysine isopeptide (Lys-Gly) (interchain with G-Cter in SUMO2) cross-link involves residue Lys-955. Ser-964 bears the Phosphoserine mark.

This chain is S1 RNA-binding domain-containing protein 1 (SRBD1), found in Pongo abelii (Sumatran orangutan).